Here is a 504-residue protein sequence, read N- to C-terminus: ATP synthase subunit alpha, chloroplastic (504 aa).

170–177 provides a ligand contact to ATP; it reads GDRQTGKT.

The protein belongs to the ATPase alpha/beta chains family. In terms of assembly, F-type ATPases have 2 components, CF(1) - the catalytic core - and CF(0) - the membrane proton channel. CF(1) has five subunits: alpha(3), beta(3), gamma(1), delta(1), epsilon(1). CF(0) has four main subunits: a, b, b' and c.

The protein localises to the plastid. Its subcellular location is the chloroplast thylakoid membrane. The enzyme catalyses ATP + H2O + 4 H(+)(in) = ADP + phosphate + 5 H(+)(out). Its function is as follows. Produces ATP from ADP in the presence of a proton gradient across the membrane. The alpha chain is a regulatory subunit. The protein is ATP synthase subunit alpha, chloroplastic of Porphyra purpurea (Red seaweed).